The chain runs to 103 residues: Pyrimidine/purine nucleoside phosphorylase (103 aa).

The protein belongs to the nucleoside phosphorylase PpnP family.

The catalysed reaction is a purine D-ribonucleoside + phosphate = a purine nucleobase + alpha-D-ribose 1-phosphate. It carries out the reaction adenosine + phosphate = alpha-D-ribose 1-phosphate + adenine. The enzyme catalyses cytidine + phosphate = cytosine + alpha-D-ribose 1-phosphate. It catalyses the reaction guanosine + phosphate = alpha-D-ribose 1-phosphate + guanine. The catalysed reaction is inosine + phosphate = alpha-D-ribose 1-phosphate + hypoxanthine. It carries out the reaction thymidine + phosphate = 2-deoxy-alpha-D-ribose 1-phosphate + thymine. The enzyme catalyses uridine + phosphate = alpha-D-ribose 1-phosphate + uracil. It catalyses the reaction xanthosine + phosphate = alpha-D-ribose 1-phosphate + xanthine. In terms of biological role, catalyzes the phosphorolysis of diverse nucleosides, yielding D-ribose 1-phosphate and the respective free bases. Can use uridine, adenosine, guanosine, cytidine, thymidine, inosine and xanthosine as substrates. Also catalyzes the reverse reactions. In Shewanella putrefaciens (strain CN-32 / ATCC BAA-453), this protein is Pyrimidine/purine nucleoside phosphorylase.